The following is a 104-amino-acid chain: Co-chaperonin GroES 1 (104 aa).

This sequence belongs to the GroES chaperonin family. As to quaternary structure, heptamer of 7 subunits arranged in a ring. Interacts with the chaperonin GroEL.

It is found in the cytoplasm. Its function is as follows. Together with the chaperonin GroEL, plays an essential role in assisting protein folding. The GroEL-GroES system forms a nano-cage that allows encapsulation of the non-native substrate proteins and provides a physical environment optimized to promote and accelerate protein folding. GroES binds to the apical surface of the GroEL ring, thereby capping the opening of the GroEL channel. The protein is Co-chaperonin GroES 1 of Mesorhizobium japonicum (strain LMG 29417 / CECT 9101 / MAFF 303099) (Mesorhizobium loti (strain MAFF 303099)).